Reading from the N-terminus, the 1222-residue chain is ATP-dependent helicase/nuclease subunit A (1222 aa).

Positions 39–495 (QKRTAQQIEA…ILLKENFRSQ (457 aa)) constitute a UvrD-like helicase ATP-binding domain. Residue 60–67 (ASAGSGKT) coordinates ATP. One can recognise a UvrD-like helicase C-terminal domain in the interval 524–810 (QLIAGSHAQT…NLMTIHKSKG (287 aa)).

This sequence belongs to the helicase family. AddA subfamily. As to quaternary structure, heterodimer of AddA and AddB/RexB. Requires Mg(2+) as cofactor.

It carries out the reaction Couples ATP hydrolysis with the unwinding of duplex DNA by translocating in the 3'-5' direction.. The enzyme catalyses ATP + H2O = ADP + phosphate + H(+). Its function is as follows. The heterodimer acts as both an ATP-dependent DNA helicase and an ATP-dependent, dual-direction single-stranded exonuclease. Recognizes the chi site generating a DNA molecule suitable for the initiation of homologous recombination. The AddA nuclease domain is required for chi fragment generation; this subunit has the helicase and 3' -&gt; 5' nuclease activities. This Streptococcus pyogenes serotype M12 (strain MGAS9429) protein is ATP-dependent helicase/nuclease subunit A.